A 292-amino-acid chain; its full sequence is Ribosomal protein L11 methyltransferase (292 aa).

Residues threonine 145, glycine 166, aspartate 188, and asparagine 229 each contribute to the S-adenosyl-L-methionine site.

It belongs to the methyltransferase superfamily. PrmA family.

It localises to the cytoplasm. It catalyses the reaction L-lysyl-[protein] + 3 S-adenosyl-L-methionine = N(6),N(6),N(6)-trimethyl-L-lysyl-[protein] + 3 S-adenosyl-L-homocysteine + 3 H(+). Methylates ribosomal protein L11. This is Ribosomal protein L11 methyltransferase from Alteromonas mediterranea (strain DSM 17117 / CIP 110805 / LMG 28347 / Deep ecotype).